A 405-amino-acid chain; its full sequence is Elongation factor Tu (405 aa).

In terms of domain architecture, tr-type G spans 10–215; sequence KPHVNVGTIG…AIDAYIPTPE (206 aa). The tract at residues 19–26 is G1; it reads GHVDHGKT. 19–26 is a GTP binding site; that stretch reads GHVDHGKT. A Mg(2+)-binding site is contributed by threonine 26. Positions 61-65 are G2; the sequence is GITIN. The segment at 82–85 is G3; it reads DCPG. Residues 82–86 and 137–140 contribute to the GTP site; these read DCPGH and NKVD. The segment at 137–140 is G4; it reads NKVD. Positions 175–177 are G5; the sequence is SAL.

It belongs to the TRAFAC class translation factor GTPase superfamily. Classic translation factor GTPase family. EF-Tu/EF-1A subfamily. In terms of assembly, monomer.

The protein localises to the cytoplasm. It catalyses the reaction GTP + H2O = GDP + phosphate + H(+). Its function is as follows. GTP hydrolase that promotes the GTP-dependent binding of aminoacyl-tRNA to the A-site of ribosomes during protein biosynthesis. In Deinococcus geothermalis (strain DSM 11300 / CIP 105573 / AG-3a), this protein is Elongation factor Tu.